We begin with the raw amino-acid sequence, 368 residues long: Leu/Ile/Val-binding protein homolog 3 (368 aa).

The signal sequence occupies residues 1–23; it reads MNLKLLSSVAFAATIGFASAAYA.

The protein belongs to the leucine-binding protein family.

In terms of biological role, component of an amino-acid transport system. This is Leu/Ile/Val-binding protein homolog 3 from Brucella melitensis biotype 1 (strain ATCC 23456 / CCUG 17765 / NCTC 10094 / 16M).